The primary structure comprises 521 residues: GMP synthase [glutamine-hydrolyzing] (521 aa).

The Glutamine amidotransferase type-1 domain maps to 5 to 197 (KILILDFGSQ…VLDICGAQPG (193 aa)). Catalysis depends on C81, which acts as the Nucleophile. Residues H171 and E173 contribute to the active site. Residues 198–390 (WTMPNYIEEA…LGLPREMVYR (193 aa)) form the GMPS ATP-PPase domain. 225–231 (SGGVDSS) is an ATP binding site.

As to quaternary structure, homodimer.

The enzyme catalyses XMP + L-glutamine + ATP + H2O = GMP + L-glutamate + AMP + diphosphate + 2 H(+). The protein operates within purine metabolism; GMP biosynthesis; GMP from XMP (L-Gln route): step 1/1. Catalyzes the synthesis of GMP from XMP. The protein is GMP synthase [glutamine-hydrolyzing] of Neisseria gonorrhoeae (strain ATCC 700825 / FA 1090).